Consider the following 548-residue polypeptide: SH2/SH3 adapter protein dreadlocks (548 aa).

3 disordered regions span residues 12-37 (IPDS…QHQN), 57-92 (QVPV…TASS), and 113-146 (GSGS…MKHG). Positions 20–37 (QQYPQQQQHPPQLPQHQN) are enriched in low complexity. Residues 113-122 (GSGSANGSGS) show a composition bias toward gly residues. Residues 123–135 (GNSSSGSAAGNAG) are compositionally biased toward low complexity. The SH3 1 domain occupies 150 to 209 (DDVCYVVAKYDYAAQGAQELDLRKNERYLLLDDSKHWWRVQNSRNQSGYVPSNYVKKEKP). The interval 219–247 (VKKGSGSKTLPNCSPSRQVESPTMSRRLP) is disordered. A compositionally biased stretch (polar residues) spans 227–242 (TLPNCSPSRQVESPTM). 2 SH3 domains span residues 252-311 (EAIG…EDCD) and 324-386 (NVLD…ELND). Residues 398–442 (SAGNGNGGGSNGGAGGGGGNDSMERRNEGNKPAAQSSGQPIERPN) are disordered. Gly residues predominate over residues 401 to 417 (NGNGGGSNGGAGGGGGN). The SH2 domain occupies 448–542 (WYYGAITRSQ…GEKLYLVRSL (95 aa)).

In terms of assembly, interacts (via SH2 and SH3 domains) with Dscam1 (via cytoplasmic domain); the interaction is direct and requires Dscam1 to be phosphorylated. Interacts (via SH2 and SH3 domains) with InR/Insulin-like receptor (via C-terminal cytoplasmic region); the interaction requires InR kinase activity, probably for autophosphorylation stimulated by insulin signaling. Interacts with Ptp61F (via C-terminus); this interaction is independent of insulin stimulation. Interacts (via SH3 domain 2) with Pak (via N-terminal PXXP motif). Post-translationally, phosphorylated by Src42A and possibly by other tyrosine kinases. Constitutively dephosphorylated by its binding partner Ptp61F.

The protein localises to the perikaryon. The protein resides in the cell projection. It localises to the axon. It is found in the growth cone. Adapter protein that links cell surface receptor tyrosine phosphorylation to downstream signaling pathways and effectors, many of which are involved in regulation of the actin cytoskeleton. Recruited by Dscam1/Down syndrome cell adhesion molecule homolog and InR/insulin-like receptor. Recruits Pak to membranes, probably when dock/dreadlocks is associated with activated receptors. Required for guidance and targeting of photoreceptor (R cell) axon projections but not for axon outgrowth, differentiation or target induction in the developing eye. As part of a signaling pathway that involves the lbm/late bloomer protein, involved in synapse formation of the RP3 motorneuron at the muscle 7/6 cleft, probably by stimulating axon defasciculation from other SNb neurons. The chain is SH2/SH3 adapter protein dreadlocks from Drosophila melanogaster (Fruit fly).